Here is a 378-residue protein sequence, read N- to C-terminus: Chloroplast stem-loop binding protein of 41 kDa b, chloroplastic (378 aa).

The N-terminal 50 residues, 1-50 (MAKMMMLQQHQPSFSLLTSSLSDFNGAKLHLQVQYKRKVHQPKGALYVSA), are a transit peptide targeting the chloroplast. Residue Ser-240 is modified to Phosphoserine.

Belongs to the NAD(P)-dependent epimerase/dehydratase family. Component of a complex made of CSP41A, CSP41B, ribosomes, and the plastid-encoded RNA polymerase. Interacts with CSP41A. Binds DNA when in complex with PRIN2. As to expression, highly expressed in seedlings, particularly in photosynthetically active organs. Mostly expressed in young and mature leaves, and, to a lower extent, in flowers. Low expression in etiolated seedlings compared to green seedlings.

Its subcellular location is the plastid. The protein localises to the chloroplast. It localises to the plastoglobule. The protein resides in the cytoplasm. Its function is as follows. Binds and cleaves RNA, particularly in stem-loops. Associates with pre-ribosomal particles in chloroplasts, and participates in chloroplast ribosomal RNA metabolism, probably during the final steps of 23S rRNA maturation. May enhance transcription by the plastid-encoded polymerase and translation in plastid via the stabilization of ribosome assembly intermediates. Required for chloroplast integrity. Involved in the regulation of the circadian system. Involved in the regulation of heteroglycans and monosaccharide mobilization. Required for full expression of genes transcribed by the plastid-encoded RNA polymerase (PEP). Essential for embryo development. The protein is Chloroplast stem-loop binding protein of 41 kDa b, chloroplastic (CSP41B) of Arabidopsis thaliana (Mouse-ear cress).